A 647-amino-acid chain; its full sequence is 1-deoxy-D-xylulose-5-phosphate synthase (647 aa).

Residues His79 and 120–122 (GHA) each bind thiamine diphosphate. Asp152 is a Mg(2+) binding site. Thiamine diphosphate contacts are provided by residues 153-154 (GS), Asn181, Phe293, and Glu377. Residue Asn181 participates in Mg(2+) binding.

It belongs to the transketolase family. DXPS subfamily. As to quaternary structure, homodimer. Requires Mg(2+) as cofactor. The cofactor is thiamine diphosphate.

It catalyses the reaction D-glyceraldehyde 3-phosphate + pyruvate + H(+) = 1-deoxy-D-xylulose 5-phosphate + CO2. It functions in the pathway metabolic intermediate biosynthesis; 1-deoxy-D-xylulose 5-phosphate biosynthesis; 1-deoxy-D-xylulose 5-phosphate from D-glyceraldehyde 3-phosphate and pyruvate: step 1/1. Catalyzes the acyloin condensation reaction between C atoms 2 and 3 of pyruvate and glyceraldehyde 3-phosphate to yield 1-deoxy-D-xylulose-5-phosphate (DXP). The polypeptide is 1-deoxy-D-xylulose-5-phosphate synthase (Bacteroides thetaiotaomicron (strain ATCC 29148 / DSM 2079 / JCM 5827 / CCUG 10774 / NCTC 10582 / VPI-5482 / E50)).